The following is a 384-amino-acid chain: Urotensin-2 receptor (384 aa).

Topologically, residues 1-54 are extracellular; the sequence is MALSPEPSSRFLVPATMGSAMPELPGAPNASLNSSLASPTEPNSLEDLVATGTI. 2 N-linked (GlcNAc...) asparagine glycosylation sites follow: Asn-29 and Asn-33. Residues 55-77 form a helical membrane-spanning segment; that stretch reads GVVLSAMGVVGMAGNVYTLTVMC. Residues 78 to 87 are Cytoplasmic-facing; that stretch reads RFLHTSASMY. A helical transmembrane segment spans residues 88-113; sequence VYVINLALADLLYLLSIPFIVATYVT. At 114–124 the chain is on the extracellular side; it reads KRWHFGDVGCR. Cys-123 and Cys-199 are joined by a disulfide. A helical membrane pass occupies residues 125-146; the sequence is VLFSLDFLTMHASIFTLTLMSR. At 147–167 the chain is on the cytoplasmic side; sequence ERYAAVVRPLDTVQRSKGYRK. The helical transmembrane segment at 168-186 threads the bilayer; the sequence is VLALGTWLLALLLALPMML. At 187–209 the chain is on the extracellular side; sequence AIRLVRRGHKSLCLPAWGQRTHR. A helical membrane pass occupies residues 210–232; it reads AYLTLLFGTSIVGPGVVIGLLYV. At 233-259 the chain is on the cytoplasmic side; it reads RLARAYWLSQRSSFTQTRRLPNPRVLY. A helical transmembrane segment spans residues 260 to 285; sequence LILGIVLLFWACFLPFWLWQLLAQYR. Topologically, residues 286 to 299 are extracellular; sequence GAPPLAPRSARIVN. Residues 300-320 traverse the membrane as a helical segment; sequence YLTTCLTYGNSCVNPFLYTLL. At 321–384 the chain is on the cytoplasmic side; sequence TKNYRDYRQR…SQAVPGSLCV (64 aa).

This sequence belongs to the G-protein coupled receptor 1 family. As to expression, expressed in neural tissue, including sensory epithelia.

The protein resides in the cell membrane. Its function is as follows. High affinity receptor for urotensin-2 and urotensin-2B. The activity of this receptor is mediated by a G-protein that activate a phosphatidylinositol-calcium second messenger system. This is Urotensin-2 receptor (UTS2R) from Bos taurus (Bovine).